Reading from the N-terminus, the 129-residue chain is Selenoprotein M (129 aa).

The first 19 residues, 1–19 (MARGLAVFFLLAGACLALA), serve as a signal peptide directing secretion. Active-site nucleophile residues include C35 and U38. Residue U38 is a non-standard amino acid, selenocysteine. Positions 107–129 (KSSKDEQVPEEYQEGPYMEKEEL) are disordered. A Prevents secretion from ER motif is present at residues 126–129 (KEEL).

The protein belongs to the selenoprotein M/F family. High expression levels observed in hepatopancreas, testis, ovaries and intestine. Also expressed in heart, stomach, gills, cranial ganglia, muscle and hematocytes.

It is found in the endoplasmic reticulum. Functionally, may function as a thiol-disulfide oxidoreductase that participates in disulfide bond formation. Involved in the regulation of reproduction during the period of rapid gonadal development. The polypeptide is Selenoprotein M (Eriocheir sinensis (Chinese mitten crab)).